Here is a 35-residue protein sequence, read N- to C-terminus: UPF0387 membrane protein YohO (35 aa).

A helical membrane pass occupies residues 6 to 26 (IGVIALFLFMALGGIGGVMLA).

Belongs to the UPF0387 family.

The protein localises to the cell inner membrane. This chain is UPF0387 membrane protein YohO, found in Shigella boydii serotype 4 (strain Sb227).